A 266-amino-acid chain; its full sequence is Apolipoprotein A-I (266 aa).

An N-terminal signal peptide occupies residues 1 to 18; it reads MKAALLTLAVLFLTGSQA. 2 tandem repeats follow at residues 67-88 and 89-110. Residues 67-266 form a 10 X approximate tandem repeats region; sequence LKLLDNWDSL…DEATKKLNAQ (200 aa). Position 109 is a methionine sulfoxide (Met-109). The 3; half-length repeat unit spans residues 111 to 121; sequence KDLEEVKQKVQ. 5 repeat units span residues 122-143, 144-165, 166-187, 188-209, and 210-231. The 9; half-length repeat unit spans residues 232 to 242; that stretch reads PALEDLRQGLL. Copy 10 of the repeat occupies 243-266; sequence PVLESFKVSLLAAIDEATKKLNAQ.

Belongs to the apolipoprotein A1/A4/E family. As to quaternary structure, homodimer. Interacts with APOA1BP and CLU. Component of a sperm activating protein complex (SPAP), consisting of APOA1, an immunoglobulin heavy chain, an immunoglobulin light chain and albumin. Interacts with NDRG1. Interacts with SCGB3A2. Interacts with NAXE and YJEFN3. Post-translationally, palmitoylated. In terms of processing, glycosylated. Phosphorylation sites are present in the extracellular medium. In terms of tissue distribution, major protein of plasma HDL, also found in chylomicrons. Synthesized in the liver and small intestine.

The protein localises to the secreted. Its function is as follows. Participates in the reverse transport of cholesterol from tissues to the liver for excretion by promoting cholesterol efflux from tissues and by acting as a cofactor for the lecithin cholesterol acyltransferase (LCAT). As part of the SPAP complex, activates spermatozoa motility. This chain is Apolipoprotein A-I (APOA1), found in Canis lupus familiaris (Dog).